A 317-amino-acid chain; its full sequence is Ribosomal RNA small subunit methyltransferase H (317 aa).

Residues 34–36 (GGH), Asp-53, Phe-80, Asp-98, and Gln-105 contribute to the S-adenosyl-L-methionine site.

This sequence belongs to the methyltransferase superfamily. RsmH family.

The protein localises to the cytoplasm. The catalysed reaction is cytidine(1402) in 16S rRNA + S-adenosyl-L-methionine = N(4)-methylcytidine(1402) in 16S rRNA + S-adenosyl-L-homocysteine + H(+). Specifically methylates the N4 position of cytidine in position 1402 (C1402) of 16S rRNA. This is Ribosomal RNA small subunit methyltransferase H from Tropheryma whipplei (strain TW08/27) (Whipple's bacillus).